Consider the following 104-residue polypeptide: uncharacterized protein (104 aa).

2 consecutive transmembrane segments (helical) span residues 47–67 (IDHR…LAML) and 72–92 (VGHV…FVLA).

The protein to M.leprae ML1584.

It localises to the cell membrane. This is an uncharacterized protein from Mycobacterium tuberculosis (strain CDC 1551 / Oshkosh).